A 35-amino-acid polypeptide reads, in one-letter code: Cupiennin-2d (35 aa).

Gln35 is modified (glutamine amide).

In terms of tissue distribution, expressed by the venom gland.

The protein localises to the secreted. The sequence is that of Cupiennin-2d from Cupiennius salei (American wandering spider).